The chain runs to 1309 residues: Disease resistance protein RPP2A (1309 aa).

The 165-residue stretch at 9 to 173 (RRYDVFPSFS…MVADDVSKKL (165 aa)) folds into the TIR 1 domain. Glu84 is a catalytic residue. An NB-ARC 1 domain is found at 187–418 (EAHLEAMSSI…FKKTLRNYLP (232 aa)). An ALOG domain is found at 488 to 585 (PNRRHSNDDW…KECILVFSCH (98 aa)). Residues 574–737 (REKECILVFS…EVVRNASLRL (164 aa)) form the TIR 2 domain. The NB-ARC 2 domain maps to 755-987 (SQSTDVEIMG…IFLDLACFFR (233 aa)). The stretch at 1114–1141 (LPHGLDTLPDELSLLHWENYPLVYLPQK) forms a coiled coil. LRR repeat units follow at residues 1145–1167 (VNLV…KKNL), 1168–1195 (EKLK…NLEH), 1214–1237 (CGKL…MVDL), 1238–1258 (TTLK…QDFA), 1259–1283 (PNLE…NLTE), and 1285–1307 (VTLD…EIIR).

It belongs to the disease resistance TIR-NB-LRR family.

The enzyme catalyses NAD(+) + H2O = ADP-D-ribose + nicotinamide + H(+). Its function is as follows. Disease resistance protein that cooperates with RPP2B to confer resistance to Hyaloperonospora parasitica isolate Cala2. The protein is Disease resistance protein RPP2A of Arabidopsis thaliana (Mouse-ear cress).